The following is a 337-amino-acid chain: Nucleoid-associated protein HS_0228 (337 aa).

This sequence belongs to the YejK family.

It localises to the cytoplasm. The protein resides in the nucleoid. This chain is Nucleoid-associated protein HS_0228, found in Histophilus somni (strain 129Pt) (Haemophilus somnus).